We begin with the raw amino-acid sequence, 260 residues long: Thaumatin-like protein 1 (260 aa).

Positions 1–32 (MIITVLHSHVSFYFIILSFLFFHALHLVGSDG) are cleaved as a signal peptide. Intrachain disulfides connect Cys41–Cys255, Cys89–Cys100, Cys105–Cys112, Cys166–Cys245, Cys171–Cys228, Cys179–Cys191, Cys195–Cys204, and Cys205–Cys215.

This sequence belongs to the thaumatin family. As to expression, expressed only in roots.

Functionally, involved in local responses of roots to colonization by non-pathogenic plant growth-promoting rhizobacteria (PGPR) fluorescent Pseudomonas spp., but seems to not being required for the establishment of subsequent induced systemic resistance (ISR). This chain is Thaumatin-like protein 1, found in Arabidopsis thaliana (Mouse-ear cress).